The sequence spans 164 residues: Putative pre-16S rRNA nuclease (164 aa).

The protein belongs to the YqgF nuclease family.

It is found in the cytoplasm. Could be a nuclease involved in processing of the 5'-end of pre-16S rRNA. The protein is Putative pre-16S rRNA nuclease of Rhizobium johnstonii (strain DSM 114642 / LMG 32736 / 3841) (Rhizobium leguminosarum bv. viciae).